Consider the following 362-residue polypeptide: Peptide chain release factor 1 (362 aa).

Position 237 is an N5-methylglutamine (Q237).

This sequence belongs to the prokaryotic/mitochondrial release factor family. Post-translationally, methylated by PrmC. Methylation increases the termination efficiency of RF1.

The protein resides in the cytoplasm. Its function is as follows. Peptide chain release factor 1 directs the termination of translation in response to the peptide chain termination codons UAG and UAA. This Aeromonas salmonicida (strain A449) protein is Peptide chain release factor 1.